The following is a 190-amino-acid chain: Vascular endothelial growth factor A (190 aa).

Positions 1–26 (MNFLLSWVHWSLALLLYLHHAKWSQA) are cleaved as a signal peptide. Disulfide bonds link cysteine 51–cysteine 93, cysteine 82–cysteine 127, and cysteine 86–cysteine 129. N-linked (GlcNAc...) asparagine glycosylation occurs at asparagine 100.

This sequence belongs to the PDGF/VEGF growth factor family. Homodimer; disulfide-linked. Also found as heterodimer with PGF. Interacts with NRP1. Interacts with isoform 2 of BSG. Interacts with CD82; this interaction inhibits VEGFA-mediated signaling pathway.

It localises to the secreted. Its function is as follows. Growth factor active in angiogenesis, vasculogenesis and endothelial cell growth. Induces endothelial cell proliferation, promotes cell migration, inhibits apoptosis and induces permeabilization of blood vessels. Binds to the FLT1/VEGFR1 and KDR/VEGFR2 receptors, heparan sulfate and heparin. Binding to NRP1 receptor initiates a signaling pathway needed for motor neuron axon guidance and cell body migration, including for the caudal migration of facial motor neurons from rhombomere 4 to rhombomere 6 during embryonic development. Also binds the DEAR/FBXW7-AS1 receptor. This chain is Vascular endothelial growth factor A (VEGFA), found in Equus caballus (Horse).